A 52-amino-acid polypeptide reads, in one-letter code: uncharacterized protein (52 aa).

The helical transmembrane segment at Met7–Phe27 threads the bilayer.

Its subcellular location is the membrane. This is an uncharacterized protein from Bacillus subtilis (strain 168).